The primary structure comprises 773 residues: Pentatricopeptide repeat-containing protein At1g76280 (773 aa).

PPR repeat units lie at residues 130–165 (DSRS…RISP), 166–200 (LLPI…RVGK), 201–231 (NGIT…YVNH), 235–269 (DILS…ALRG), 332–369 (LRWS…NLKP), 370–400 (YDST…ISEC), 402–436 (YSYP…KLRP), 524–558 (GTPT…GCPA), 559–593 (DVAT…GFSP), 594–628 (KAVT…EIHL), and 629–663 (DVLS…KVNP).

Belongs to the PPR family. P subfamily.

The polypeptide is Pentatricopeptide repeat-containing protein At1g76280 (Arabidopsis thaliana (Mouse-ear cress)).